The sequence spans 195 residues: Translation initiation factor IF-3 (195 aa).

Residues 158 to 195 (EQSEVQQRPKREGRNMIMFLSPRKTPLIKKEEDAKENN) are disordered. Basic and acidic residues predominate over residues 185-195 (IKKEEDAKENN).

This sequence belongs to the IF-3 family. In terms of assembly, monomer.

The protein resides in the cytoplasm. In terms of biological role, IF-3 binds to the 30S ribosomal subunit and shifts the equilibrium between 70S ribosomes and their 50S and 30S subunits in favor of the free subunits, thus enhancing the availability of 30S subunits on which protein synthesis initiation begins. This Prochlorococcus marinus (strain MIT 9515) protein is Translation initiation factor IF-3.